The sequence spans 141 residues: uncharacterized protein (141 aa).

This is an uncharacterized protein from Acheta domesticus (House cricket).